Here is a 154-residue protein sequence, read N- to C-terminus: Insulin-like growth factor 1 (154 aa).

The tract at residues 50 to 78 (GPETLCGAELVDALQFVCGDRGFYFNKPT) is b. 3 cysteine pairs are disulfide-bonded: Cys55–Cys97, Cys67–Cys110, and Cys96–Cys101. Positions 79-90 (GYGSSSRRAPQT) are c. The interval 91-111 (GIVDECCFRSCDLRRLEMYCA) is a. The interval 112–119 (PLKAAKSA) is d. The propeptide at 120-154 (RSVRAQRHTDMPKAQKEVHLKNTSRGSAGNKNYRM) is e peptide. Residues 121–154 (SVRAQRHTDMPKAQKEVHLKNTSRGSAGNKNYRM) are disordered. Residues 126 to 139 (RHTDMPKAQKEVHL) are compositionally biased toward basic and acidic residues. The segment covering 140–154 (KNTSRGSAGNKNYRM) has biased composition (polar residues).

It belongs to the insulin family. Forms a ternary complex with IGFR1 and ITGAV:ITGB3. Forms a ternary complex with IGFR1 and ITGA6:ITGB4. Forms a ternary complex with IGFBP3 and ALS.

The protein localises to the secreted. The insulin-like growth factors, isolated from plasma, are structurally and functionally related to insulin but have a much higher growth-promoting activity. May be a physiological regulator of [1-14C]-2-deoxy-D-glucose (2DG) transport and glycogen synthesis in osteoblasts. Stimulates glucose transport in bone-derived osteoblastic (PyMS) cells and is effective at much lower concentrations than insulin, not only regarding glycogen and DNA synthesis but also with regard to enhancing glucose uptake. May play a role in synapse maturation. Ca(2+)-dependent exocytosis of IGF1 is required for sensory perception of smell in the olfactory bulb. Acts as a ligand for IGF1R. Binds to the alpha subunit of IGF1R, leading to the activation of the intrinsic tyrosine kinase activity which autophosphorylates tyrosine residues in the beta subunit thus initiating a cascade of down-stream signaling events leading to activation of the PI3K-AKT/PKB and the Ras-MAPK pathways. Binds to integrins ITGAV:ITGB3 and ITGA6:ITGB4. Its binding to integrins and subsequent ternary complex formation with integrins and IGFR1 are essential for IGF1 signaling. Induces the phosphorylation and activation of IGFR1, MAPK3/ERK1, MAPK1/ERK2 and AKT1. As part of the MAPK/ERK signaling pathway, acts as a negative regulator of apoptosis in cardiomyocytes via promotion of STUB1/CHIP-mediated ubiquitination and degradation of ICER-type isoforms of CREM. The sequence is that of Insulin-like growth factor 1 from Ovis aries (Sheep).